The following is a 190-amino-acid chain: ATP-dependent Clp protease proteolytic subunit 2 (190 aa).

S98 (nucleophile) is an active-site residue. Residue H123 is part of the active site.

It belongs to the peptidase S14 family. In terms of assembly, fourteen ClpP subunits assemble into 2 heptameric rings which stack back to back to give a disk-like structure with a central cavity, resembling the structure of eukaryotic proteasomes.

It is found in the cytoplasm. It carries out the reaction Hydrolysis of proteins to small peptides in the presence of ATP and magnesium. alpha-casein is the usual test substrate. In the absence of ATP, only oligopeptides shorter than five residues are hydrolyzed (such as succinyl-Leu-Tyr-|-NHMec, and Leu-Tyr-Leu-|-Tyr-Trp, in which cleavage of the -Tyr-|-Leu- and -Tyr-|-Trp bonds also occurs).. Its function is as follows. Cleaves peptides in various proteins in a process that requires ATP hydrolysis. Has a chymotrypsin-like activity. Plays a major role in the degradation of misfolded proteins. This chain is ATP-dependent Clp protease proteolytic subunit 2, found in Bacillus licheniformis (strain ATCC 14580 / DSM 13 / JCM 2505 / CCUG 7422 / NBRC 12200 / NCIMB 9375 / NCTC 10341 / NRRL NRS-1264 / Gibson 46).